A 1528-amino-acid chain; its full sequence is Cell surface antigen I/II (1528 aa).

The signal sequence occupies residues 1 to 50; sequence MLQKCKLEGIIICNEKRLLGAAKVKSGRTLSGALLGTAILASGAGQKALA. Residues 50-156 form a disordered region; it reads AEETSTTSTS…PEIKDDYSKQ (107 aa). Over residues 51 to 68 the composition is skewed to low complexity; the sequence is EETSTTSTSGGDTAVVGT. Polar residues-rich tracts occupy residues 83–97 and 124–133; these read NPSS…QARQ and TVSQDATVNK. The segment covering 142 to 154 has biased composition (basic and acidic residues); the sequence is ANQKEPEIKDDYS. 4 Ag I/II A repeats span residues 161–235, 236–315, 316–396, and 397–478; these read QKAT…QQAN, SDSQ…QAGN, AANE…QSGN, and AANE…KKDL. 2 disordered regions span residues 840 to 951 and 1459 to 1480; these read VPKV…VEPV and SNTV…PKTT. Residues 855 to 879 show a composition bias toward basic and acidic residues; sequence TKPDEPTYEVEKELVDLPVEPKYEP. A compositionally biased stretch (polar residues) spans 1459–1468; the sequence is SNTVRTSTPE. The LPXTG sorting signal signature appears at 1503–1507; sequence LPATG. Residue threonine 1506 is modified to Pentaglycyl murein peptidoglycan amidated threonine. The propeptide at 1507-1528 is removed by sortase; sequence GDSSNAYLPLLGLVSLTAGFSC.

It belongs to the antigen I/II family.

The protein localises to the secreted. The protein resides in the cell wall. This chain is Cell surface antigen I/II, found in Streptococcus downei (Streptococcus sobrinus).